The primary structure comprises 252 residues: Ribosomal RNA small subunit methyltransferase NEP1 (252 aa).

Residues Met176, Gly209, Gly214, and 227 to 232 (ISNYPL) each bind S-adenosyl-L-methionine.

It belongs to the class IV-like SAM-binding methyltransferase superfamily. RNA methyltransferase NEP1 family. In terms of assembly, homodimer. Part of the small subunit (SSU) processome, composed of more than 70 proteins and the RNA chaperone small nucleolar RNA (snoRNA) U3.

The protein localises to the nucleus. The protein resides in the nucleolus. It carries out the reaction a pseudouridine in rRNA + S-adenosyl-L-methionine = an N(1)-methylpseudouridine in rRNA + S-adenosyl-L-homocysteine + H(+). Functionally, S-adenosyl-L-methionine-dependent pseudouridine N(1)-methyltransferase that methylates a pseudouridine in 18S rRNA. Involved the biosynthesis of the hypermodified N1-methyl-N3-(3-amino-3-carboxypropyl) pseudouridine (m1acp3-Psi) conserved in eukaryotic 18S rRNA. Also has an essential role in 40S ribosomal subunit biogenesis independent on its methyltransferase activity, facilitating the incorporation of ribosomal protein S19 during the formation of pre-ribosomes. S-adenosyl-L-methionine-dependent pseudouridine N(1)-methyltransferase that methylates pseudouridine at position in 18S rRNA. Involved the biosynthesis of the hypermodified N1-methyl-N3-(3-amino-3-carboxypropyl) pseudouridine (m1acp3-Psi) conserved in eukaryotic 18S rRNA. Is not able to methylate uridine at this position. Also has an essential role in 40S ribosomal subunit biogenesis independent on its methyltransferase activity, facilitating the incorporation of ribosomal protein S19 during the formation of pre-ribosomes. Part of the small subunit (SSU) processome, first precursor of the small eukaryotic ribosomal subunit. During the assembly of the SSU processome in the nucleolus, many ribosome biogenesis factors, an RNA chaperone and ribosomal proteins associate with the nascent pre-rRNA and work in concert to generate RNA folding, modifications, rearrangements and cleavage as well as targeted degradation of pre-ribosomal RNA by the RNA exosome. In Drosophila melanogaster (Fruit fly), this protein is Ribosomal RNA small subunit methyltransferase NEP1.